Here is a 103-residue protein sequence, read N- to C-terminus: Pyrimidine/purine nucleoside phosphorylase (103 aa).

Belongs to the nucleoside phosphorylase PpnP family.

It carries out the reaction a purine D-ribonucleoside + phosphate = a purine nucleobase + alpha-D-ribose 1-phosphate. It catalyses the reaction adenosine + phosphate = alpha-D-ribose 1-phosphate + adenine. The enzyme catalyses cytidine + phosphate = cytosine + alpha-D-ribose 1-phosphate. The catalysed reaction is guanosine + phosphate = alpha-D-ribose 1-phosphate + guanine. It carries out the reaction inosine + phosphate = alpha-D-ribose 1-phosphate + hypoxanthine. It catalyses the reaction thymidine + phosphate = 2-deoxy-alpha-D-ribose 1-phosphate + thymine. The enzyme catalyses uridine + phosphate = alpha-D-ribose 1-phosphate + uracil. The catalysed reaction is xanthosine + phosphate = alpha-D-ribose 1-phosphate + xanthine. Catalyzes the phosphorolysis of diverse nucleosides, yielding D-ribose 1-phosphate and the respective free bases. Can use uridine, adenosine, guanosine, cytidine, thymidine, inosine and xanthosine as substrates. Also catalyzes the reverse reactions. The protein is Pyrimidine/purine nucleoside phosphorylase of Sulfurimonas denitrificans (strain ATCC 33889 / DSM 1251) (Thiomicrospira denitrificans (strain ATCC 33889 / DSM 1251)).